The sequence spans 234 residues: GTP:AMP phosphotransferase, mitochondrial (234 aa).

Gly-24–Thr-29 contributes to the GTP binding site. The NMP stretch occupies residues Ser-45–Leu-74. Residues Ser-46, Arg-51, Lys-72–Leu-74, Gly-103–Arg-106, and Gln-110 each bind AMP. Positions Asn-144–Asp-181 are LID. GTP contacts are provided by residues Arg-145 and Val-154 to Tyr-155. Arg-178 and Arg-189 together coordinate AMP. Ser-218 lines the GTP pocket.

Belongs to the adenylate kinase family. AK3 subfamily. As to quaternary structure, monomer.

It is found in the mitochondrion matrix. The enzyme catalyses a ribonucleoside 5'-triphosphate + AMP = a ribonucleoside 5'-diphosphate + ADP. Involved in maintaining the homeostasis of cellular nucleotides by catalyzing the interconversion of nucleoside phosphates. Has GTP:AMP phosphotransferase and ITP:AMP phosphotransferase activities. Does not accept ATP as phosphate donor. The polypeptide is GTP:AMP phosphotransferase, mitochondrial (Saccharomyces cerevisiae (Baker's yeast)).